The chain runs to 656 residues: Leucine aminopeptidase 2 (656 aa).

Residues 173–175 (QLE) and 302–307 (PYGGME) each bind substrate. His331 contacts Zn(2+). Glu332 acts as the Proton acceptor in catalysis. Positions 335 and 354 each coordinate Zn(2+). Tyr420 acts as the Proton donor in catalysis.

This sequence belongs to the peptidase M1 family. Requires Zn(2+) as cofactor.

Its subcellular location is the cytoplasm. It is found in the nucleus. The enzyme catalyses an epoxide + H2O = an ethanediol. Its function is as follows. Aminopeptidase that preferentially cleaves di- and tripeptides. Also has low epoxide hydrolase activity (in vitro). Can hydrolyze the epoxide leukotriene LTA(4) but it forms preferentially 5,6-dihydroxy-7,9,11,14-eicosatetraenoic acid rather than the cytokine leukotriene B(4) as the product compared to the homologous mammalian enzyme (in vitro). The sequence is that of Leucine aminopeptidase 2 from Vanderwaltozyma polyspora (strain ATCC 22028 / DSM 70294 / BCRC 21397 / CBS 2163 / NBRC 10782 / NRRL Y-8283 / UCD 57-17) (Kluyveromyces polysporus).